A 577-amino-acid chain; its full sequence is Torulene dioxygenase (577 aa).

Histidine 239, histidine 291, histidine 361, and histidine 570 together coordinate Fe(2+).

Belongs to the carotenoid oxygenase family. Fe(2+) serves as cofactor.

It localises to the cytoplasm. The protein localises to the cytosol. It carries out the reaction torulene + O2 = 4'-apo-beta-carotenal + 3-methyl-2-butenal. Its pathway is carotenoid biosynthesis. Its function is as follows. Torulene dioxygenase; part of the pathway that mediates the biosynthesis of neurosporaxanthin, a carboxylic apocarotenoid acting as an essential protective pigments and leading to orange pigmentation. CarT mediates the cleavage of torulene into beta-apo-4'-carotenal, the aldehyde corresponding to the acidic neurosporaxanthin. Is also active on other monocyclic synthetic substrates such as beta-apo-8'-carotenal and beta-apo-10'-carotenal to produce beta-apo-14'-carotenal and retinal(beta-apo-15'-carotenal), respectively. Neurosporaxanthin is synthesized from geranyl-geranyl pyrophosphate (GGPP) through several enzymatic activities. Phytoene synthase activity performed by the bifunctional enzyme carAR first produces phytoene from geranyl-geranyl pyrophosphate (GGPP). The phytoene dehydrogenase carB then introduces 4 desaturations to lead to lycopene which is substrate of the carotene cyclase activity of carAR that leads to the production of gamma-carotene. CarB then performs a 5th desaturation reaction to yield torulene. Torulene is the substrate of the dioxidase carT that breaks the molecule, removing five carbon atoms to yield beta-apo-4'-carotenal, whereas the aldehyde dehydrogenase carD mediates the last step by converting beta-apo-4'-carotenal into neurosporaxanthin. The sequence is that of Torulene dioxygenase from Fusarium fujikuroi (Bakanae and foot rot disease fungus).